Reading from the N-terminus, the 503-residue chain is MLLEVLNPRHYNVTSMVSEVVPIASIAILLLTGFLLLVWNYEDTSSIPGPSYFLGIGPLISHCRFLWMGIGSACNYYNKMYGEFMRVWVCGEETLIISKSSSMFHVMKHSHYISRFGSKLGLQFIGMHEKGIIFNNNPALWKAVRPFFTKALSGPGLVRMVTICADSITKHLDRLEEVCNDLGYVDVLTLMRRIMLDTSNILFLGIPLDESAIVVKIQGYFDAWQALLLKPDIFFKISWLCRKYEKSVKDLKDAMEILIEEKRHRISTAEKLEDCIDFATELIFAEKRGELTKENVNQCILEMLIAAPDTMSVSVFFMLFLIAKHPQVEEAMMREIQTVVGERDIRIDDMQKLKVVENFINESMRYQPVVDLVMRKALEDDVIDGYPVKKGTNIILNLGRMHRLEFFPKPNEFTLENFAKNVPYRYFQPFGFGPRACAGKYIAMVMMKVILVTLLRRFHVQTLQGRCVEKMQKKNDLSLHPDETSDRLEMIFIPRNSDKCLEC.

The next 3 membrane-spanning stretches (helical) occupy residues 19–39 (EVVPIASIAILLLTGFLLLVW), 53–73 (FLGIGPLISHCRFLWMGIGSA), and 303–323 (MLIAAPDTMSVSVFFMLFLIA). Residues aspartate 309 and methionine 374 each contribute to the substrate site. Cysteine 437 lines the heme pocket.

It belongs to the cytochrome P450 family. Heme serves as cofactor.

It localises to the endoplasmic reticulum membrane. Its subcellular location is the microsome membrane. It catalyses the reaction testosterone + 3 reduced [NADPH--hemoprotein reductase] + 3 O2 = 17beta-estradiol + formate + 3 oxidized [NADPH--hemoprotein reductase] + 4 H2O + 4 H(+). The enzyme catalyses androst-4-ene-3,17-dione + 3 reduced [NADPH--hemoprotein reductase] + 3 O2 = estrone + formate + 3 oxidized [NADPH--hemoprotein reductase] + 4 H2O + 4 H(+). The catalysed reaction is androst-4-ene-3,17-dione + reduced [NADPH--hemoprotein reductase] + O2 = 19-hydroxyandrost-4-ene-3,17-dione + oxidized [NADPH--hemoprotein reductase] + H2O + H(+). It carries out the reaction 19-hydroxyandrost-4-ene-3,17-dione + reduced [NADPH--hemoprotein reductase] + O2 = 19-oxo-androst-4-ene-3,17-dione + oxidized [NADPH--hemoprotein reductase] + 2 H2O + H(+). It catalyses the reaction 19-oxo-androst-4-ene-3,17-dione + reduced [NADPH--hemoprotein reductase] + O2 = estrone + formate + oxidized [NADPH--hemoprotein reductase] + H2O + 2 H(+). The enzyme catalyses estrone + reduced [NADPH--hemoprotein reductase] + O2 = 2-hydroxyestrone + oxidized [NADPH--hemoprotein reductase] + H2O + H(+). The catalysed reaction is 17beta-hydroxy-5alpha-androstan-3-one + reduced [NADPH--hemoprotein reductase] + O2 = 17beta,19-dihydroxy-3-oxo-5alpha-androstanone + oxidized [NADPH--hemoprotein reductase] + H2O + H(+). It carries out the reaction 17beta,19-dihydroxy-3-oxo-5alpha-androstanone + reduced [NADPH--hemoprotein reductase] + O2 = 17beta-hydroxy-3,19-dioxo-5alpha-androstanone + oxidized [NADPH--hemoprotein reductase] + 2 H2O + H(+). It catalyses the reaction 17beta-hydroxy-3,19-dioxo-5alpha-androstanone + reduced [NADPH--hemoprotein reductase] + O2 = 17beta-hydroxy-3-oxo-19-nor-5alpha-androst-1-ene + formate + oxidized [NADPH--hemoprotein reductase] + H2O + 2 H(+). It functions in the pathway steroid hormone biosynthesis. Functionally, a cytochrome P450 monooxygenase that catalyzes the conversion of C19 androgens, androst-4-ene-3,17-dione (androstenedione) and testosterone to the C18 estrogens, estrone and estradiol, respectively. Catalyzes three successive oxidations of C19 androgens: two conventional oxidations at C19 yielding 19-hydroxy and 19-oxo/19-aldehyde derivatives, followed by a third oxidative aromatization step that involves C1-beta hydrogen abstraction combined with cleavage of the C10-C19 bond to yield a phenolic A ring and formic acid. Alternatively, the third oxidative reaction yields a 19-norsteroid and formic acid. Converts dihydrotestosterone to delta1,10-dehydro 19-nordihydrotestosterone and may play a role in homeostasis of this potent androgen. Also displays 2-hydroxylase activity toward estrone. Mechanistically, uses molecular oxygen inserting one oxygen atom into a substrate, and reducing the second into a water molecule, with two electrons provided by NADPH via cytochrome P450 reductase (CPR; NADPH-ferrihemoprotein reductase). The polypeptide is Aromatase (CYP19A1) (Capra hircus (Goat)).